The primary structure comprises 210 residues: Two-component response regulator ORR7 (210 aa).

Residues 53 to 92 are disordered; it reads VVPLHDNASAEDDDDDEEDDDEDDDDDDDEDDEEEAAPPY. Residues 61–88 are compositionally biased toward acidic residues; that stretch reads SAEDDDDDEEDDDEDDDDDDDEDDEEEA. One can recognise a Response regulatory domain in the interval 92–205; it reads YVMAVDDSSV…VRPADISRIT (114 aa). D142 is modified (4-aspartylphosphate).

It belongs to the ARR family. Type-A subfamily. Post-translationally, two-component system major event consists of a His-to-Asp phosphorelay between a sensor histidine kinase (HK) and a response regulator (RR). In plants, the His-to-Asp phosphorelay involves an additional intermediate named Histidine-containing phosphotransfer protein (HPt). This multistep phosphorelay consists of a His-Asp-His-Asp sequential transfer of a phosphate group between first a His and an Asp of the HK protein, followed by the transfer to a conserved His of the HPt protein and finally the transfer to an Asp in the receiver domain of the RR protein.

Functionally, functions as a response regulator involved in His-to-Asp phosphorelay signal transduction system. Phosphorylation of the Asp residue in the receiver domain activates the ability of the protein to promote the transcription of target genes. Type-A response regulators seem to act as negative regulators of the cytokinin signaling. The protein is Two-component response regulator ORR7 of Oryza sativa subsp. japonica (Rice).